The sequence spans 281 residues: Energy-coupling factor transporter ATP-binding protein EcfA1 (281 aa).

An ABC transporter domain is found at 7 to 242 (ISVEDIVFRY…NKELVRIGLD (236 aa)). 42–49 (GHNGSGKS) is an ATP binding site. The active-site Proton acceptor is the Glu168.

This sequence belongs to the ABC transporter superfamily. Energy-coupling factor EcfA family. Forms a stable energy-coupling factor (ECF) transporter complex composed of 2 membrane-embedded substrate-binding proteins (S component), 2 ATP-binding proteins (A component) and 2 transmembrane proteins (T component).

The protein resides in the cell membrane. Its function is as follows. ATP-binding (A) component of a common energy-coupling factor (ECF) ABC-transporter complex. Unlike classic ABC transporters this ECF transporter provides the energy necessary to transport a number of different substrates. The polypeptide is Energy-coupling factor transporter ATP-binding protein EcfA1 (Bacillus subtilis (strain 168)).